A 276-amino-acid chain; its full sequence is Large ribosomal subunit protein uL2 (276 aa).

Disordered regions lie at residues 35–55 and 222–276; these read APLHKKGGRNNQGRLTVRHQG and GSVM…RRKK. Basic residues predominate over residues 258-276; the sequence is KTRKKNKHSDKYIVRRRKK.

This sequence belongs to the universal ribosomal protein uL2 family. As to quaternary structure, part of the 50S ribosomal subunit. Forms a bridge to the 30S subunit in the 70S ribosome.

Functionally, one of the primary rRNA binding proteins. Required for association of the 30S and 50S subunits to form the 70S ribosome, for tRNA binding and peptide bond formation. It has been suggested to have peptidyltransferase activity; this is somewhat controversial. Makes several contacts with the 16S rRNA in the 70S ribosome. The chain is Large ribosomal subunit protein uL2 from Shouchella clausii (strain KSM-K16) (Alkalihalobacillus clausii).